The following is a 2179-amino-acid chain: MGQTVSKEEIKEEIEKQLNICFLSLDQEDIHSKNSISFNLSTVSAHKGSIDFIFNKTSNNNSSLIGSNGFVNISNNNIIDDLIKDKSTSILLQYANKHNDHDLNKNKNNNNNSEENNNNSGEGDEDNTGEKAPPPAPSSPLSPSSSSSTSTTTTPLSTSISLNDLNSMPRKRTTIKYKQGSFEASSYDGDEISIQVVKKNWINNSNDNNSQQRPRLYERSLKTSQQQQQQQQQQFKFQPNETLSLWEYFDEINSPPMLYNIDQNNLNFTNNYIVQEKLNSLDNKDDDDNNNNNNNSNSQSFTFNKEFIKSVLQSFSTYISSLPNSIHFTDTNIPPSIDYTSPNVLKLHPNLLPIIEIIYNDIDNNDNDNDDDDDKNNNNLNDKIFIIYKKYNYTLDGLLRYSLQYLQRNQKITTFMIYQLIQLFSFLHQREIVHGDLQPSNIHLNNQMWLGLEGFSFPSTPLYHQPLENQFESSMNKWINGELSNFNYLMILNHLAHRHIGDPMNHPVLPWVIDFTTSPINIDNDNDSRDDVDNSSSSNNNNNNNNEDQSGKTVGWRDLTKTKYRLNKGDEQLDFQFFNTGNSTTLGDDSMGGGIGSIGSTGGITNSSNNGGGGGSGNSGKAHHISDILSELTYYSYLARRTSVPLLRRFVRTNYEPNEYPATMERLYRWTPDECIPEFFTDSTIFKSIHSDMPDLQLPDWVPNQSTQEFIKIHMNALESDHVSKQLHSWIDLTFGYLLSGEEAIKAKNLALMDTTIPRNNGIVQLFNHPHPKKKYLKSLKYQRQQQTQQHQQQTQQQPQFDTEFTIKFNESSFRYENQNINHNSTFLPNTTINSILNNLSNVNNHHHHHSHNSNIPNTVSSRSDSFGSNSSSSAPGNSNSNILLSPSMSSSMGSLNSATSPSSQSQSSHQQTSSTPTSQTQRSFSIINNNNSSSSSNSGVNNKPRTSSGKKEGENKPSLAKFLPSLFTQAIKIEKEDNSIVSSSPTNTPVQIDLLSSVNSNYIGYGSSIGNSSMQHQLYLQQQLQQQQQQQAQQQQSQQQSQQQQANSPNSKQLHLIHSKSEESMIKKYSNGLFSSMGISKSTTNAPTTNNTTTNSNMGDSIGNNITSPPSPTSLKDSSSIQQQQQQQQQQQQNSESTRPITPPNVSNSTTDLSSIYTNQEHIIEPLPAELELELYEYELLNKDVTGINANIIYSSSPTNVSTTTNTTTSTTQPYIIYNNNTTQNNVASYHSQQKKPNVFIESLLNCELNNEFGHNFENLLPIYRPLEFNDNNSGSSELSIDNEKNKGLIKIFSNNKEQSNLEILKSNDMFALGCIIAELYQGYPLFTSKGLENHFLNHSNSSNNNNNNNNNNNNNNKNGSFMITSNLPNNVKEIVDKLIQPNPMERSEVNELLSSSLFPNYFKQMYHFLVHYHSLNTPEERLTFTLANIGIVTSLPNESIDLILPFILELFYDSKTMVSALIDLLDPLSQRLGIHLSTSYLLPCLIALYQRHDDHLLQCHLIQIPMIDMIVSRFGRDVYIHHILPFLLDSVKTNPKDNPNHEMLTTALIKISKVLGIPLTIRHMMYPLLVALTKPRLQHLNEPLVAIASSLGENVIVKFYFPSIFILIQKHSSKASRSESIPCTLLSLLQELILLVKPGLVLRSLLKESTQLASLLLNPSNTSLLLPLAETLLRISGRIGVNHTKNYILKYVQQFFSNYSDLYDYSGDNSYAKIGGDSETTKQLRSIYSPEMTYYLYYKLARIIGFEVMRAEISDNSLIEHIMRIYIKENNIKTTNSTITTTTTTTTTTTTTTTTNNNNENPNSLNFIPPYVSDDGLYDIIEETLDQKISSTYLLDDYQDYDDLICDKTFTLQGNIVAQYKEHNASIKSLAVSPSEERFISGSKDNLVKIWSLDSTKSLTTYNQHMHTAHTVHFVSSLVASCDITSIQVWDPESKIKVNVFYEPTGSFSCFEPISSKYLIASTCESTLSFYDLSMGSLTHEWSLAYQTGQAIRCIATSNDHLIGSNSNQFSSSSFIASATPTWVATGSSSGMITLLDTRTGTILEQWKSHHDSPVNKLIAQGSRYLISCGDKSVIQWDLHQSPPIISKMWKGFKDNITNASLYQNDLIVSSGHKLSSMTLLDDPYQLTSGGGNQNTFRVDGLKLNTPKQSNILSLSFFPLHHVLLAGTDDGFIKICQ.

Residues 100–167 (DHDLNKNKNN…TSISLNDLNS (68 aa)) form a disordered region. Composition is skewed to low complexity over residues 106–121 (NKNN…NNSG) and 141–159 (LSPS…LSTS). The WD 1 repeat unit spans residues 216-256 (LYERSLKTSQQQQQQQQQQFKFQPNETLSLWEYFDEINSPP). Disordered stretches follow at residues 281–300 (LDNK…NSQS), 523–556 (DNDN…TVGW), 589–621 (DSMG…NSGK), 778–801 (KSLK…QPQF), 844–959 (NNHH…NKPS), 1033–1055 (AQQQ…SKQL), 1079–1153 (GISK…STTD), 1339–1362 (NHSN…KNGS), and 1785–1807 (TTTT…PNSL). The BEACH domain maps to 463–801 (YHQPLENQFE…QQQTQQQPQF (339 aa)). Low complexity predominate over residues 534-548 (NSSSSNNNNNNNNED). Gly residues predominate over residues 590 to 602 (SMGGGIGSIGSTG). Composition is skewed to low complexity over residues 783-800 (QRQQ…QQPQ), 853-943 (NSNI…GVNN), 1033-1047 (AQQQ…QQQA), and 1084-1098 (TTNA…TNSN). Residues 1021 to 1049 (LQQQLQQQQQQQAQQQQSQQQSQQQQANS) are a coiled coil. Positions 1064–1400 (ESMIKKYSNG…VNELLSSSLF (337 aa)) constitute a Protein kinase domain. Positions 1099–1122 (MGDSIGNNITSPPSPTSLKDSSSI) are enriched in polar residues. A compositionally biased stretch (low complexity) spans 1123-1134 (QQQQQQQQQQQQ). Polar residues predominate over residues 1135–1153 (NSESTRPITPPNVSNSTTD). Composition is skewed to low complexity over residues 1339–1360 (NHSN…NNKN) and 1785–1801 (TTTT…NNNN). 6 WD repeats span residues 1864–1903 (EHNA…SLTT), 1906–1942 (QHMH…KVNV), 1945–1983 (EPTG…LTHE), 2007–2048 (SNSN…ILEQ), 2052–2089 (HHDS…PIIS), and 2149–2179 (PKQS…KICQ).

It belongs to the protein kinase superfamily. Ser/Thr protein kinase family.

In Dictyostelium discoideum (Social amoeba), this protein is Probable inactive serine/threonine-protein kinase lvsG (lvsG).